A 347-amino-acid chain; its full sequence is Protein RecA (347 aa).

67–74 (GPESSGKT) lines the ATP pocket.

It belongs to the RecA family.

The protein localises to the cytoplasm. Functionally, can catalyze the hydrolysis of ATP in the presence of single-stranded DNA, the ATP-dependent uptake of single-stranded DNA by duplex DNA, and the ATP-dependent hybridization of homologous single-stranded DNAs. It interacts with LexA causing its activation and leading to its autocatalytic cleavage. This chain is Protein RecA, found in Helicobacter pylori (strain P12).